Consider the following 145-residue polypeptide: Large ribosomal subunit protein uL11 (145 aa).

The protein belongs to the universal ribosomal protein uL11 family. In terms of assembly, part of the ribosomal stalk of the 50S ribosomal subunit. Interacts with L10 and the large rRNA to form the base of the stalk. L10 forms an elongated spine to which L12 dimers bind in a sequential fashion forming a multimeric L10(L12)X complex. One or more lysine residues are methylated.

Functionally, forms part of the ribosomal stalk which helps the ribosome interact with GTP-bound translation factors. In Rickettsia felis (strain ATCC VR-1525 / URRWXCal2) (Rickettsia azadi), this protein is Large ribosomal subunit protein uL11.